The following is a 244-amino-acid chain: tRNA pseudouridine synthase A (244 aa).

The active-site Nucleophile is the aspartate 52. Tyrosine 110 serves as a coordination point for substrate.

This sequence belongs to the tRNA pseudouridine synthase TruA family. As to quaternary structure, homodimer.

It catalyses the reaction uridine(38/39/40) in tRNA = pseudouridine(38/39/40) in tRNA. Functionally, formation of pseudouridine at positions 38, 39 and 40 in the anticodon stem and loop of transfer RNAs. The chain is tRNA pseudouridine synthase A from Geotalea daltonii (strain DSM 22248 / JCM 15807 / FRC-32) (Geobacter daltonii).